The primary structure comprises 504 residues: MQTALVILDGWGLGDHDRRNAVQTASTPTFDRLIEKGANGTLDVSGRQVGLPAGQMGNSEVGHLNIGAGQVVKQAYTRVEDAIDNGSFQTNAAINAAFNHAVATNGRVHFMGLLSDGGVHSEQEHLHALIELAGDRNIDAITHVFTDGRDTNPHSSEQYLTTLEEVIHTHGTGDIATVSGRYYAMDRDKNWTRTRMSYDAIVNRTAEHTTSTALEAVSESYDRGDTDEFIEPTLIDNTPAVEDGDAVFVFNFRPDRVRQLVRMLADIDPAWSFETDPPTTELATMAQYDETFSLPVAFPPNEQHDTLGEVIATAGLTQLRIAESEKYAHVTYFLNGGREIAFEDERREIIKSPDVSTYDQQPSMSSNEVTDTAIEQINTTDPDVLILNYANPDMVGHTGDFTAAIEAIESVDTQLDRLLETIYAAGGHVIVTADHGNADNMGTAANPHTAHTTNPVPIVYTRPDGNGDGDTIRDGGSLCDIAPTVLELLSVEQPAAMTGSSLIE.

Mn(2+) contacts are provided by Asp9 and Ser59. Ser59 serves as the catalytic Phosphoserine intermediate. Residues His120, 149-150 (RD), Arg181, Arg187, 253-256 (RPDR), and Lys326 each bind substrate. Residues Asp393, His397, Asp434, His435, and His451 each contribute to the Mn(2+) site.

It belongs to the BPG-independent phosphoglycerate mutase family. Mn(2+) is required as a cofactor.

It carries out the reaction (2R)-2-phosphoglycerate = (2R)-3-phosphoglycerate. Its pathway is carbohydrate degradation; glycolysis; pyruvate from D-glyceraldehyde 3-phosphate: step 3/5. Its function is as follows. Catalyzes the interconversion of 2-phosphoglycerate and 3-phosphoglycerate. This is 2,3-bisphosphoglycerate-independent phosphoglycerate mutase from Haloquadratum walsbyi (strain DSM 16790 / HBSQ001).